The sequence spans 308 residues: Olfactory receptor 5H8 (308 aa).

The Extracellular portion of the chain corresponds to 1 to 28 (MDDENATLLTEFVLTGLTYQSEWKIPLF). A helical membrane pass occupies residues 29 to 49 (LAFLVIYLITIMANLGLIAVI). The Cytoplasmic portion of the chain corresponds to 50–56 (WKDSHLH). The chain crosses the membrane as a helical span at residues 57 to 77 (IPMYLFLGSLAFVDAWLSSSV). Over 78–98 (TPKMLISFLAKSMIISVSECK) the chain is Extracellular. Cysteines 97 and 179 form a disulfide. The chain crosses the membrane as a helical span at residues 99-119 (IQFFSFGISGTTECFLLATMA). At 120–133 (YDRYVAICKPLLYP) the chain is on the cytoplasmic side. Residues 134–154 (VIMTNGLCIWLLVLSFIGGFL) traverse the membrane as a helical segment. The Extracellular segment spans residues 155–195 (HALIHEGILFRLTFCNSNIIHHFYCDIIPLLKISCTDPSIN). A helical membrane pass occupies residues 196-216 (FLMLFILSGSIQVFTILTVLV). At 217–238 (SYTFVLFTILKKKAKDIRKAFS) the chain is on the cytoplasmic side. A helical membrane pass occupies residues 239 to 259 (TCGAHLLSVSLYYGPLLFMYV). Topologically, residues 260–270 (HPASPQADDQD) are extracellular. A helical transmembrane segment spans residues 271–291 (MVESLFYTVIIPFLNPIIYSL). Residues 292 to 308 (RNKQVIDSLTKTLKGNV) lie on the Cytoplasmic side of the membrane.

It belongs to the G-protein coupled receptor 1 family.

The protein localises to the cell membrane. In terms of biological role, odorant receptor. This is Olfactory receptor 5H8 from Homo sapiens (Human).